The following is an 85-amino-acid chain: Beta-insect depressant toxin LqhIT2 (85 aa).

A signal peptide spans 1–21 (MKLLLLLIVSASMLIESLVNA). Residues 22-82 (DGYIKRRDGC…TWKSETNTCG (61 aa)) enclose the LCN-type CS-alpha/beta domain. Intrachain disulfides connect C31–C81, C35–C56, C42–C63, and C46–C65. A Glycine amide modification is found at G82.

The protein belongs to the long (4 C-C) scorpion toxin superfamily. Sodium channel inhibitor family. Beta subfamily. In terms of tissue distribution, expressed by the venom gland.

Its subcellular location is the secreted. Its function is as follows. Depressant insect beta-toxins cause a transient contraction paralysis followed by a slow flaccid paralysis. They bind voltage-independently at site-4 of sodium channels (Nav) and shift the voltage of activation toward more negative potentials thereby affecting sodium channel activation and promoting spontaneous and repetitive firing. This toxin is active only on insects. This chain is Beta-insect depressant toxin LqhIT2, found in Leiurus hebraeus (Hebrew deathstalker scorpion).